Consider the following 287-residue polypeptide: MQELNQIFNTIKDIAKEISEVIKYADLGYTTHENATGDTQLKLDVKSDEIITAKFKQLSCVKALISEEKEDELEINKNAKFIIAYDPLDGSSLVDVNFAVGSIFGIYEDEVKPENLIAAAYSIYGPRLELVIAEKKGALPKFYRLGKDGEFKFVKELELKEKGKLNATGATQKGWSQTHRNFINELFNEGYRLRYSGAMVSDLHQILLKGGGLFSYPATSDHPNGKLRVVFEVLPFAFIYENAKGATTDGKNQTLFDIKIEKIHQTTPCFFGSRDEISLLHKFYEQK.

Residues Glu-67, Asp-86, Leu-88, and Asp-89 each coordinate Mg(2+). Substrate-binding positions include 89–92, Tyr-195, and Lys-226; that span reads DGSS. Glu-232 is a binding site for Mg(2+).

Belongs to the FBPase class 1 family. In terms of assembly, homotetramer. Requires Mg(2+) as cofactor.

The protein resides in the cytoplasm. It catalyses the reaction beta-D-fructose 1,6-bisphosphate + H2O = beta-D-fructose 6-phosphate + phosphate. Its pathway is carbohydrate biosynthesis; gluconeogenesis. In Campylobacter concisus (strain 13826), this protein is Fructose-1,6-bisphosphatase class 1.